The following is a 640-amino-acid chain: Threonine--tRNA ligase (640 aa).

Positions 1–61 (MPIITLPDGS…DRDATLQIIT (61 aa)) constitute a TGS domain. The interval 242–533 (DHRRIGKQLD…LIEHYAGAFP (292 aa)) is catalytic. 3 residues coordinate Zn(2+): C333, H384, and H510.

It belongs to the class-II aminoacyl-tRNA synthetase family. In terms of assembly, homodimer. Requires Zn(2+) as cofactor.

The protein localises to the cytoplasm. It carries out the reaction tRNA(Thr) + L-threonine + ATP = L-threonyl-tRNA(Thr) + AMP + diphosphate + H(+). Its function is as follows. Catalyzes the attachment of threonine to tRNA(Thr) in a two-step reaction: L-threonine is first activated by ATP to form Thr-AMP and then transferred to the acceptor end of tRNA(Thr). Also edits incorrectly charged L-seryl-tRNA(Thr). This Pseudomonas aeruginosa (strain LESB58) protein is Threonine--tRNA ligase.